The sequence spans 278 residues: Pantothenate synthetase (278 aa).

Residue 26–33 (MGNLHEGH) coordinates ATP. The Proton donor role is filled by His33. Gln57 is a (R)-pantoate binding site. Gln57 serves as a coordination point for beta-alanine. 144–147 (GKKD) contributes to the ATP binding site. Gln150 provides a ligand contact to (R)-pantoate. Residues Gly173 and 181-184 (LSSR) each bind ATP.

The protein belongs to the pantothenate synthetase family. In terms of assembly, homodimer.

The protein resides in the cytoplasm. The catalysed reaction is (R)-pantoate + beta-alanine + ATP = (R)-pantothenate + AMP + diphosphate + H(+). The protein operates within cofactor biosynthesis; (R)-pantothenate biosynthesis; (R)-pantothenate from (R)-pantoate and beta-alanine: step 1/1. Its function is as follows. Catalyzes the condensation of pantoate with beta-alanine in an ATP-dependent reaction via a pantoyl-adenylate intermediate. This chain is Pantothenate synthetase, found in Neisseria meningitidis serogroup C / serotype 2a (strain ATCC 700532 / DSM 15464 / FAM18).